The chain runs to 490 residues: Glutamate--tRNA ligase (490 aa).

Positions 10–20 match the 'HIGH' region motif; it reads PSPTGRMHVGN. The Zn(2+) site is built by cysteine 109, cysteine 111, cysteine 140, and histidine 142. A 'KMSKS' region motif is present at residues 257-261; that stretch reads KLSKR. Residue lysine 260 coordinates ATP.

It belongs to the class-I aminoacyl-tRNA synthetase family. Glutamate--tRNA ligase type 1 subfamily. In terms of assembly, monomer. Zn(2+) is required as a cofactor.

It localises to the cytoplasm. It catalyses the reaction tRNA(Glu) + L-glutamate + ATP = L-glutamyl-tRNA(Glu) + AMP + diphosphate. Functionally, catalyzes the attachment of glutamate to tRNA(Glu) in a two-step reaction: glutamate is first activated by ATP to form Glu-AMP and then transferred to the acceptor end of tRNA(Glu). The polypeptide is Glutamate--tRNA ligase (Lachnoclostridium phytofermentans (strain ATCC 700394 / DSM 18823 / ISDg) (Clostridium phytofermentans)).